A 203-amino-acid polypeptide reads, in one-letter code: Large ribosomal subunit protein uL18 (203 aa).

The protein belongs to the universal ribosomal protein uL18 family. As to quaternary structure, part of the 50S ribosomal subunit. Contacts the 5S and 23S rRNAs.

Functionally, this is one of the proteins that bind and probably mediate the attachment of the 5S RNA into the large ribosomal subunit, where it forms part of the central protuberance. The sequence is that of Large ribosomal subunit protein uL18 from Pyrococcus horikoshii (strain ATCC 700860 / DSM 12428 / JCM 9974 / NBRC 100139 / OT-3).